A 337-amino-acid chain; its full sequence is tRNA N6-adenosine threonylcarbamoyltransferase (337 aa).

Fe cation is bound by residues His-111 and His-115. Residues Leu-134 to Gly-138, Asp-167, Gly-180, and Asn-272 contribute to the substrate site. Residue Asp-300 coordinates Fe cation.

Belongs to the KAE1 / TsaD family. The cofactor is Fe(2+).

It is found in the cytoplasm. The enzyme catalyses L-threonylcarbamoyladenylate + adenosine(37) in tRNA = N(6)-L-threonylcarbamoyladenosine(37) in tRNA + AMP + H(+). Functionally, required for the formation of a threonylcarbamoyl group on adenosine at position 37 (t(6)A37) in tRNAs that read codons beginning with adenine. Is involved in the transfer of the threonylcarbamoyl moiety of threonylcarbamoyl-AMP (TC-AMP) to the N6 group of A37, together with TsaE and TsaB. TsaD likely plays a direct catalytic role in this reaction. This is tRNA N6-adenosine threonylcarbamoyltransferase from Salmonella schwarzengrund (strain CVM19633).